A 145-amino-acid chain; its full sequence is Large ribosomal subunit protein uL16 (145 aa).

Residues 1–21 (MLVPTRVKHRKQHRGRMHGKA) show a composition bias toward basic residues. The tract at residues 1-22 (MLVPTRVKHRKQHRGRMHGKAT) is disordered.

This sequence belongs to the universal ribosomal protein uL16 family. As to quaternary structure, part of the 50S ribosomal subunit.

In terms of biological role, binds 23S rRNA and is also seen to make contacts with the A and possibly P site tRNAs. In Desulfitobacterium hafniense (strain Y51), this protein is Large ribosomal subunit protein uL16.